Consider the following 65-residue polypeptide: Large ribosomal subunit protein uL30 (65 aa).

Belongs to the universal ribosomal protein uL30 family. Part of the 50S ribosomal subunit.

The sequence is that of Large ribosomal subunit protein uL30 from Desulfosudis oleivorans (strain DSM 6200 / JCM 39069 / Hxd3) (Desulfococcus oleovorans).